A 178-amino-acid polypeptide reads, in one-letter code: Large ribosomal subunit protein bL25 (178 aa).

It belongs to the bacterial ribosomal protein bL25 family. CTC subfamily. As to quaternary structure, part of the 50S ribosomal subunit; part of the 5S rRNA/L5/L18/L25 subcomplex. Contacts the 5S rRNA. Binds to the 5S rRNA independently of L5 and L18.

In terms of biological role, this is one of the proteins that binds to the 5S RNA in the ribosome where it forms part of the central protuberance. This is Large ribosomal subunit protein bL25 from Helicobacter pylori (strain Shi470).